Reading from the N-terminus, the 283-residue chain is MIIHPQFDPVLISIGPLAVRWYALSYILGFILFTFLGRRRIAQGLSVFTKESLDDFLTWGILGVILGGRLGYVLFYKFSDYLAHPLDIFKVWEGGMSFHGGFLGVVIAIWLFGRKHGIGFLKLMDTVAPLVPLGLASGRIGNFINGELWGRVTDINAFWAMGFPQARYEDAEAAAHNPLWAEWLQQYGMLPRHPSQLYQFALEGICLFAVVWLFSKKQRPTGQVASLFLGGYGIFRFIAEFARQPDDYLGLLTLGLSMGQWLSVPMIVLGIVGFVRFGMKKQH.

The next 4 helical transmembrane spans lie at 17–37 (LAVR…TFLG), 56–76 (FLTW…VLFY), 92–112 (WEGG…IWLF), and 117–137 (GIGF…GLAS). Arg-139 serves as a coordination point for a 1,2-diacyl-sn-glycero-3-phospho-(1'-sn-glycerol). A run of 3 helical transmembrane segments spans residues 194 to 214 (PSQL…VWLF), 222 to 242 (GQVA…AEFA), and 255 to 275 (GLSM…VGFV).

This sequence belongs to the Lgt family.

It localises to the cell inner membrane. It carries out the reaction L-cysteinyl-[prolipoprotein] + a 1,2-diacyl-sn-glycero-3-phospho-(1'-sn-glycerol) = an S-1,2-diacyl-sn-glyceryl-L-cysteinyl-[prolipoprotein] + sn-glycerol 1-phosphate + H(+). It functions in the pathway protein modification; lipoprotein biosynthesis (diacylglyceryl transfer). Catalyzes the transfer of the diacylglyceryl group from phosphatidylglycerol to the sulfhydryl group of the N-terminal cysteine of a prolipoprotein, the first step in the formation of mature lipoproteins. This Neisseria meningitidis serogroup C / serotype 2a (strain ATCC 700532 / DSM 15464 / FAM18) protein is Phosphatidylglycerol--prolipoprotein diacylglyceryl transferase.